A 294-amino-acid chain; its full sequence is Eukaryotic translation initiation factor 3 subunit F (294 aa).

Positions 7–155 (VNVHPGVYMN…VRAYLRSKAG (149 aa)) constitute an MPN domain.

This sequence belongs to the eIF-3 subunit F family. Component of the eukaryotic translation initiation factor 3 (eIF-3) complex.

It is found in the cytoplasm. In terms of biological role, component of the eukaryotic translation initiation factor 3 (eIF-3) complex, which is involved in protein synthesis of a specialized repertoire of mRNAs and, together with other initiation factors, stimulates binding of mRNA and methionyl-tRNAi to the 40S ribosome. The eIF-3 complex specifically targets and initiates translation of a subset of mRNAs involved in cell proliferation. The protein is Eukaryotic translation initiation factor 3 subunit F of Caenorhabditis elegans.